Consider the following 150-residue polypeptide: MPWSMKDYPASLKNLEKPVRKKAIDIANAMIDEGYEEGRAIPIATSKAKEWAENASTDEIDDFLTHDDETERDADPSSGSGPELMNKAEHVIKHKKGWAVKAEGAKRVSEIKDTKKEAIERAKEIAAHKGTEVIVHLADGSVQRKIKTGS.

The tract at residues 49–88 (KEWAENASTDEIDDFLTHDDETERDADPSSGSGPELMNKA) is disordered. A compositionally biased stretch (basic and acidic residues) spans 63–75 (FLTHDDETERDAD).

This is an uncharacterized protein from Bacillus subtilis (strain 168).